The sequence spans 124 residues: Large ribosomal subunit protein uL29 (124 aa).

Belongs to the universal ribosomal protein uL29 family.

The sequence is that of Large ribosomal subunit protein uL29 (RPL35) from Tetrahymena thermophila (strain SB210).